The primary structure comprises 80 residues: Large ribosomal subunit protein eL38 (80 aa).

It belongs to the eukaryotic ribosomal protein eL38 family. Component of the large ribosomal subunit (LSU). Mature N.crassa ribosomes consist of a small (40S) and a large (60S) subunit. The 40S small subunit contains 1 molecule of ribosomal RNA (18S rRNA) and at least 32 different proteins. The large 60S subunit contains 3 rRNA molecules (26S, 5.8S and 5S rRNA) and at least 42 different proteins.

It localises to the cytoplasm. Functionally, component of the ribosome, a large ribonucleoprotein complex responsible for the synthesis of proteins in the cell. The small ribosomal subunit (SSU) binds messenger RNAs (mRNAs) and translates the encoded message by selecting cognate aminoacyl-transfer RNA (tRNA) molecules. The large subunit (LSU) contains the ribosomal catalytic site termed the peptidyl transferase center (PTC), which catalyzes the formation of peptide bonds, thereby polymerizing the amino acids delivered by tRNAs into a polypeptide chain. The nascent polypeptides leave the ribosome through a tunnel in the LSU and interact with protein factors that function in enzymatic processing, targeting, and the membrane insertion of nascent chains at the exit of the ribosomal tunnel. The protein is Large ribosomal subunit protein eL38 (rpl-38) of Neurospora crassa (strain ATCC 24698 / 74-OR23-1A / CBS 708.71 / DSM 1257 / FGSC 987).